A 251-amino-acid polypeptide reads, in one-letter code: 3-deoxy-manno-octulosonate cytidylyltransferase (251 aa).

This sequence belongs to the KdsB family.

The protein localises to the cytoplasm. The catalysed reaction is 3-deoxy-alpha-D-manno-oct-2-ulosonate + CTP = CMP-3-deoxy-beta-D-manno-octulosonate + diphosphate. It functions in the pathway nucleotide-sugar biosynthesis; CMP-3-deoxy-D-manno-octulosonate biosynthesis; CMP-3-deoxy-D-manno-octulosonate from 3-deoxy-D-manno-octulosonate and CTP: step 1/1. It participates in bacterial outer membrane biogenesis; lipopolysaccharide biosynthesis. In terms of biological role, activates KDO (a required 8-carbon sugar) for incorporation into bacterial lipopolysaccharide in Gram-negative bacteria. This Rhizobium leguminosarum bv. trifolii (strain WSM2304) protein is 3-deoxy-manno-octulosonate cytidylyltransferase.